The chain runs to 355 residues: Mitochondrial import inner membrane translocase subunit TIM50 (355 aa).

The N-terminal 44 residues, Met-1–Ala-44, are a transit peptide targeting the mitochondrion. Positions Arg-25–Gly-61 are disordered. The Mitochondrial matrix portion of the chain corresponds to Gly-45–Lys-67. Positions Lys-47–Gly-61 are enriched in polar residues. The chain crosses the membrane as a helical span at residues Val-68–Phe-88. Residues Gly-89–Pro-355 are Mitochondrial intermembrane-facing. The FCP1 homology domain occupies Tyr-145 to Ile-288. Position 343 is a phosphoserine (Ser-343).

This sequence belongs to the TIM50 family. As to quaternary structure, component of the TIM23 complex at least composed of TIMM23, TIMM17 (TIMM17A or TIMM17B) and TIMM50; within this complex, directly interacts with TIMM23. The complex interacts with the TIMM44 component of the PAM complex and with DNAJC15.

It localises to the mitochondrion inner membrane. Functionally, essential component of the TIM23 complex, a complex that mediates the translocation of transit peptide-containing proteins across the mitochondrial inner membrane. Has some phosphatase activity in vitro; however such activity may not be relevant in vivo. This Bos taurus (Bovine) protein is Mitochondrial import inner membrane translocase subunit TIM50 (TIMM50).